A 414-amino-acid chain; its full sequence is Serpin A3-6 (414 aa).

Positions 1–25 are cleaved as a signal peptide; sequence MRTERVSPLLALGILVAGLCSRVHC. Asn-103, Asn-183, Asn-233, Asn-267, and Asn-321 each carry an N-linked (GlcNAc...) asparagine glycan.

This sequence belongs to the serpin family. Homodimer.

The protein resides in the cytoplasmic vesicle. The protein localises to the secretory vesicle. Its subcellular location is the chromaffin granule. It localises to the secreted. Its function is as follows. Serine protease inhibitor. The sequence is that of Serpin A3-6 from Bos taurus (Bovine).